The sequence spans 438 residues: Xylose isomerase (438 aa).

Catalysis depends on residues H102 and D105. E233, E269, H272, D297, D308, D310, and D340 together coordinate Mg(2+).

It belongs to the xylose isomerase family. As to quaternary structure, homotetramer. Mg(2+) is required as a cofactor.

The protein localises to the cytoplasm. The enzyme catalyses alpha-D-xylose = alpha-D-xylulofuranose. This is Xylose isomerase from Solibacter usitatus (strain Ellin6076).